Consider the following 189-residue polypeptide: Stathmin-4 (189 aa).

2 S-palmitoyl cysteine lipidation sites follow: cysteine 20 and cysteine 22. The region spanning 48–189 is the SLD domain; sequence SDMEVIELNK…NKELKEEASR (142 aa). Residues glutamate 54 and serine 90 each carry the phosphoserine modification. A coiled-coil region spans residues 90–189; that stretch reads SLEEIQKKLE…NKELKEEASR (100 aa). The segment at 168-189 is disordered; the sequence is QEKDKHAEEVRKNKELKEEASR.

Belongs to the stathmin family. In terms of tissue distribution, nervous tissue.

It is found in the golgi apparatus. The protein localises to the cell projection. The protein resides in the growth cone. It localises to the axon. Its function is as follows. Exhibits microtubule-destabilizing activity. This Rattus norvegicus (Rat) protein is Stathmin-4 (Stmn4).